Consider the following 326-residue polypeptide: DnaJ homolog subfamily B member 6 (326 aa).

A J domain is found at 2-69; that stretch reads VDYYEVLGVQ…KKRDIYDKYG (68 aa). The segment at 2–146 is interaction with HSP70; it reads VDYYEVLGVQ…TGSFFSAFSG (145 aa). The interval 119-242 is interaction with KRT18; sequence FEDFFGNRRG…ADDDALAEER (124 aa). Omega-N-methylarginine is present on Arg-135. The interval 249–326 is disordered; it reads ALPAQPAGLR…KKKKSTKGNH (78 aa). Ser-277 carries the post-translational modification Phosphoserine.

Homooligomer. Interacts with BAG3, HSPB8 and STUB1. Interacts with ALKBH1. Interacts with HSP70, KRT18 and PTTG. In terms of assembly, interacts with histone deacetylases HDAC4, HDAC6, and SIRT2, HDAC activity is required for antiaggregation. In terms of tissue distribution, widely expressed. Highest levels in testis and brain, and lower levels in heart, spleen, intestine, ovary, placenta, lung, kidney, pancreas, thymus, prostate, skeletal muscle, liver and leukocytes. In testis, expressed in germ cells in the earlier stages of differentiation pathway as well as in spermatids. In brain, expressed at a higher level in hippocampus and thalamus and a lower level in amygdala, substantia nigra, corpus callosum and caudate nucleus.

It is found in the cytoplasm. Its subcellular location is the perinuclear region. The protein localises to the nucleus. It localises to the myofibril. The protein resides in the sarcomere. It is found in the z line. Functionally, has a stimulatory effect on the ATPase activity of HSP70 in a dose-dependent and time-dependent manner and hence acts as a co-chaperone of HSP70. Plays an indispensable role in the organization of KRT8/KRT18 filaments. Acts as an endogenous molecular chaperone for neuronal proteins including huntingtin. Suppresses aggregation and toxicity of polyglutamine-containing, aggregation-prone proteins. Also reduces cellular toxicity and caspase-3 activity. In terms of biological role, isoform B but not isoform A inhibits huntingtin aggregation. This Homo sapiens (Human) protein is DnaJ homolog subfamily B member 6 (DNAJB6).